Reading from the N-terminus, the 366-residue chain is UDP-N-acetylglucosamine--N-acetylmuramyl-(pentapeptide) pyrophosphoryl-undecaprenol N-acetylglucosamine transferase (366 aa).

Residues 14-16 (TGG), asparagine 125, arginine 168, serine 196, and glutamine 297 contribute to the UDP-N-acetyl-alpha-D-glucosamine site.

It belongs to the glycosyltransferase 28 family. MurG subfamily.

The protein localises to the cell inner membrane. The enzyme catalyses di-trans,octa-cis-undecaprenyl diphospho-N-acetyl-alpha-D-muramoyl-L-alanyl-D-glutamyl-meso-2,6-diaminopimeloyl-D-alanyl-D-alanine + UDP-N-acetyl-alpha-D-glucosamine = di-trans,octa-cis-undecaprenyl diphospho-[N-acetyl-alpha-D-glucosaminyl-(1-&gt;4)]-N-acetyl-alpha-D-muramoyl-L-alanyl-D-glutamyl-meso-2,6-diaminopimeloyl-D-alanyl-D-alanine + UDP + H(+). Its pathway is cell wall biogenesis; peptidoglycan biosynthesis. Cell wall formation. Catalyzes the transfer of a GlcNAc subunit on undecaprenyl-pyrophosphoryl-MurNAc-pentapeptide (lipid intermediate I) to form undecaprenyl-pyrophosphoryl-MurNAc-(pentapeptide)GlcNAc (lipid intermediate II). The protein is UDP-N-acetylglucosamine--N-acetylmuramyl-(pentapeptide) pyrophosphoryl-undecaprenol N-acetylglucosamine transferase of Rhodopseudomonas palustris (strain BisB5).